We begin with the raw amino-acid sequence, 391 residues long: Secreted aspartic protease 1 (391 aa).

The signal sequence occupies residues 1 to 18 (MFLKNIFIALAIALLVDA). Positions 19–50 (SPAKRSPGFVTLDFDVIKTPVNATGQEGKVKR) are cleaved as a propeptide — activation peptide. Asparagine 40 carries an N-linked (GlcNAc...) asparagine glycan. A Peptidase A1 domain is found at 64–377 (YAADITIGSN…DLDDDKISLA (314 aa)). Residue aspartate 82 is part of the active site. A pepstatin A-binding site is contributed by 82–84 (DTG). A disulfide bridge connects residues cysteine 97 and cysteine 109. Zn(2+)-binding residues include aspartate 241 and aspartate 263. The active site involves aspartate 267. 267–271 (DSGTT) is a binding site for pepstatin A. Residues cysteine 305 and cysteine 343 are joined by a disulfide bond.

It belongs to the peptidase A1 family. In terms of assembly, monomer.

The protein resides in the secreted. The enzyme catalyses Preferential cleavage at the carboxyl of hydrophobic amino acids, but fails to cleave 15-Leu-|-Tyr-16, 16-Tyr-|-Leu-17 and 24-Phe-|-Phe-25 of insulin B chain. Activates trypsinogen, and degrades keratin.. Inhibited by pepstatin A analogs and squash aspartic peptidase inhibitor (SQAPI). Secreted aspartic peptidases (SAPs) are a group of ten acidic hydrolases considered as key virulence factors. These enzymes supply the fungus with nutrient amino acids as well as are able to degrade the selected host's proteins involved in the immune defense. Induces host inflammatory cytokine production in a proteolytic activity-independent way. Plays a role in tissue damage during superficial infection. Moreover, acts toward human hemoglobin though limited proteolysis to generate a variety of antimicrobial hemocidins, enabling to compete with the other microorganisms of the same physiological niche using the microbicidal peptides generated from the host protein. In terms of biological role, plays a key role in defense against host by cleaving histatin-5 (Hst 5), a peptide from human saliva that carries out fungicidal activity. The cleavage rate decreases in an order of SAP2 &gt; SAP9 &gt; SAP3 &gt; SAP7 &gt; SAP4 &gt; SAP1 &gt; SAP8. The first cleavage occurs between residues 'Lys-17' and 'His-18' of Hst 5, giving DSHAKRHHGYKRKFHEK and HHSHRGY peptides. Further fragmentation by SAP1 results in AKRHHGYKRKFHEK and AKRHHGY products. This chain is Secreted aspartic protease 1, found in Candida albicans (Yeast).